A 752-amino-acid chain; its full sequence is Catalase-peroxidase (752 aa).

The disordered stretch occupies residues 1 to 20 (MENELVSKVKAPVPGNQTNT). Positions 111 to 234 (WHSAGTYRIG…LGAVQMGLIY (124 aa)) form a cross-link, tryptophyl-tyrosyl-methioninium (Trp-Tyr) (with M-260). Histidine 112 serves as the catalytic Proton acceptor. Residues 234-260 (YVNPEGPNGKPDPAAAAVDIRETFARM) constitute a cross-link (tryptophyl-tyrosyl-methioninium (Tyr-Met) (with W-111)). Histidine 275 is a binding site for heme b.

Belongs to the peroxidase family. Peroxidase/catalase subfamily. As to quaternary structure, homodimer or homotetramer. Heme b serves as cofactor. Post-translationally, formation of the three residue Trp-Tyr-Met cross-link is important for the catalase, but not the peroxidase activity of the enzyme.

The enzyme catalyses H2O2 + AH2 = A + 2 H2O. It catalyses the reaction 2 H2O2 = O2 + 2 H2O. Its function is as follows. Bifunctional enzyme with both catalase and broad-spectrum peroxidase activity. The sequence is that of Catalase-peroxidase from Koribacter versatilis (strain Ellin345).